A 569-amino-acid chain; its full sequence is Proline--tRNA ligase (569 aa).

This sequence belongs to the class-II aminoacyl-tRNA synthetase family. ProS type 1 subfamily. In terms of assembly, homodimer.

It localises to the cytoplasm. The enzyme catalyses tRNA(Pro) + L-proline + ATP = L-prolyl-tRNA(Pro) + AMP + diphosphate. Catalyzes the attachment of proline to tRNA(Pro) in a two-step reaction: proline is first activated by ATP to form Pro-AMP and then transferred to the acceptor end of tRNA(Pro). As ProRS can inadvertently accommodate and process non-cognate amino acids such as alanine and cysteine, to avoid such errors it has two additional distinct editing activities against alanine. One activity is designated as 'pretransfer' editing and involves the tRNA(Pro)-independent hydrolysis of activated Ala-AMP. The other activity is designated 'posttransfer' editing and involves deacylation of mischarged Ala-tRNA(Pro). The misacylated Cys-tRNA(Pro) is not edited by ProRS. The polypeptide is Proline--tRNA ligase (Campylobacter jejuni subsp. jejuni serotype O:23/36 (strain 81-176)).